The sequence spans 320 residues: Olfactory receptor 51E2 (320 aa).

Residues Met1–Phe24 are Extracellular-facing. Asn5 carries an N-linked (GlcNAc...) asparagine glycan. A helical membrane pass occupies residues Trp25–Val45. Topologically, residues Phe46 to Ser53 are cytoplasmic. The helical transmembrane segment at Leu54–Thr74 threads the bilayer. The Extracellular portion of the chain corresponds to Ser75 to Thr98. Residues Cys96 and Cys178 are joined by a disulfide bond. Residues Gln99–Phe119 form a helical membrane-spanning segment. Over Asp120–Thr138 the chain is Cytoplasmic. Residues Val139–Pro159 traverse the membrane as a helical segment. Over Leu160–Val195 the chain is Extracellular. A helical transmembrane segment spans residues Val196–Ser216. The Cytoplasmic segment spans residues Tyr217–Ala236. Residues Phe237–Leu257 form a helical membrane-spanning segment. The Extracellular segment spans residues Ser258–Arg272. The chain crosses the membrane as a helical span at residues Val273–Ala293. The Cytoplasmic segment spans residues Lys294–Lys320.

It belongs to the G-protein coupled receptor 1 family. Highly expressed in the prostate. Also expressed in spleen, liver, olfactory epithelium, retinal pigment epithelium and medulla oblongata. In the retinal pigment epithelium expression is restricted to the pigment cells and choroid (at protein level). Expressed in epidermal melanocytes (at protein level).

The protein resides in the cell membrane. Its subcellular location is the early endosome membrane. Its function is as follows. Olfactory receptor. Activated by the odorant, beta-ionone, a synthetic terpenoid. The activity of this receptor is probably mediated by G-proteins leading to the elevation of intracellular Ca(2+), cAMP and activation of the protein kinases PKA and MAPK3/MAPK1. Stimulation of OR51E2 by beta-ionone affects melanocyte proliferation, differentiation, and melanogenesis. Activation of OR51E2 by beta-ionone increases proliferation and migration of primary retinal pigment epithelial (RPE) cells. Activated also by the short-chain fatty acids (SCFA) acetate and propionate. In response to SCFA, may positively regulate renin secretion and increase blood pressure. May also be activated by steroid hormones and regulate cell proliferation. Activated by L-lactate in glomus cells. This chain is Olfactory receptor 51E2, found in Homo sapiens (Human).